Reading from the N-terminus, the 220-residue chain is MELVEETIPKEGKKMGERIVVDKAYLYQEDKPLTVCKTSLFYTGDGFAAYDCRGDIIFRVDSYGPDTRDNDEIVLMDATGKCLLTVKRKRPTLHQRWEGFLGERSEGQKPIFSVRRSSIIGRCTMEVEVYDGTGEEYIIDGDFSQRSCLIYDTKKCTVAEIKRKVDASTNVMLGRDVFTLEIKPGFDGAFAMGLVVVLDQINGDDPVEIGDEQVHPFVED.

The protein belongs to the LOR family.

Its function is as follows. Might be related to the phospholipid scramblase and tubby-like superfamily of membrane tethered transcription factors. The protein is Protein LURP-one-related 12 of Arabidopsis thaliana (Mouse-ear cress).